A 357-amino-acid chain; its full sequence is Phenylalanine--tRNA ligase alpha subunit (357 aa).

Mg(2+) is bound at residue E259.

Belongs to the class-II aminoacyl-tRNA synthetase family. Phe-tRNA synthetase alpha subunit type 1 subfamily. In terms of assembly, tetramer of two alpha and two beta subunits. It depends on Mg(2+) as a cofactor.

It localises to the cytoplasm. It carries out the reaction tRNA(Phe) + L-phenylalanine + ATP = L-phenylalanyl-tRNA(Phe) + AMP + diphosphate + H(+). This is Phenylalanine--tRNA ligase alpha subunit from Jannaschia sp. (strain CCS1).